A 405-amino-acid polypeptide reads, in one-letter code: Acetate kinase (405 aa).

Residue Asn-7 participates in Mg(2+) binding. Residue Lys-14 participates in ATP binding. Arg-99 is a substrate binding site. Asp-156 functions as the Proton donor/acceptor in the catalytic mechanism. 215 to 219 (HLGNG) is a binding site for ATP. Glu-391 contacts Mg(2+).

The protein belongs to the acetokinase family. Homodimer. It depends on Mg(2+) as a cofactor. Mn(2+) is required as a cofactor.

The protein resides in the cytoplasm. It catalyses the reaction acetate + ATP = acetyl phosphate + ADP. It participates in metabolic intermediate biosynthesis; acetyl-CoA biosynthesis; acetyl-CoA from acetate: step 1/2. Its function is as follows. Catalyzes the formation of acetyl phosphate from acetate and ATP. Can also catalyze the reverse reaction. The chain is Acetate kinase from Trichormus variabilis (strain ATCC 29413 / PCC 7937) (Anabaena variabilis).